The primary structure comprises 135 residues: Mu-like prophage FluMu protein gp46 (135 aa).

The protein to phage Mu protein gp46.

The chain is Mu-like prophage FluMu protein gp46 from Haemophilus influenzae (strain ATCC 51907 / DSM 11121 / KW20 / Rd).